The chain runs to 245 residues: Phosphoribosylaminoimidazole-succinocarboxamide synthase (245 aa).

The protein belongs to the SAICAR synthetase family.

It carries out the reaction 5-amino-1-(5-phospho-D-ribosyl)imidazole-4-carboxylate + L-aspartate + ATP = (2S)-2-[5-amino-1-(5-phospho-beta-D-ribosyl)imidazole-4-carboxamido]succinate + ADP + phosphate + 2 H(+). It functions in the pathway purine metabolism; IMP biosynthesis via de novo pathway; 5-amino-1-(5-phospho-D-ribosyl)imidazole-4-carboxamide from 5-amino-1-(5-phospho-D-ribosyl)imidazole-4-carboxylate: step 1/2. The polypeptide is Phosphoribosylaminoimidazole-succinocarboxamide synthase (Trichormus variabilis (strain ATCC 29413 / PCC 7937) (Anabaena variabilis)).